Reading from the N-terminus, the 166-residue chain is FMN reductase (NADH) RutF (166 aa).

Belongs to the non-flavoprotein flavin reductase family. RutF subfamily.

It catalyses the reaction FMNH2 + NAD(+) = FMN + NADH + 2 H(+). Functionally, catalyzes the reduction of FMN to FMNH2 which is used to reduce pyrimidine by RutA via the Rut pathway. This is FMN reductase (NADH) RutF from Cronobacter sakazakii (strain ATCC BAA-894) (Enterobacter sakazakii).